We begin with the raw amino-acid sequence, 173 residues long: Crossover junction endodeoxyribonuclease RuvC (173 aa).

Catalysis depends on residues aspartate 8, glutamate 67, and aspartate 139. Mg(2+) contacts are provided by aspartate 8, glutamate 67, and aspartate 139.

The protein belongs to the RuvC family. In terms of assembly, homodimer which binds Holliday junction (HJ) DNA. The HJ becomes 2-fold symmetrical on binding to RuvC with unstacked arms; it has a different conformation from HJ DNA in complex with RuvA. In the full resolvosome a probable DNA-RuvA(4)-RuvB(12)-RuvC(2) complex forms which resolves the HJ. Mg(2+) is required as a cofactor.

The protein resides in the cytoplasm. The catalysed reaction is Endonucleolytic cleavage at a junction such as a reciprocal single-stranded crossover between two homologous DNA duplexes (Holliday junction).. Functionally, the RuvA-RuvB-RuvC complex processes Holliday junction (HJ) DNA during genetic recombination and DNA repair. Endonuclease that resolves HJ intermediates. Cleaves cruciform DNA by making single-stranded nicks across the HJ at symmetrical positions within the homologous arms, yielding a 5'-phosphate and a 3'-hydroxyl group; requires a central core of homology in the junction. The consensus cleavage sequence is 5'-(A/T)TT(C/G)-3'. Cleavage occurs on the 3'-side of the TT dinucleotide at the point of strand exchange. HJ branch migration catalyzed by RuvA-RuvB allows RuvC to scan DNA until it finds its consensus sequence, where it cleaves and resolves the cruciform DNA. The chain is Crossover junction endodeoxyribonuclease RuvC from Vibrio vulnificus (strain YJ016).